Consider the following 490-residue polypeptide: Tandem C2 domains nuclear protein (490 aa).

A phosphoserine mark is found at Ser-83, Ser-156, Ser-168, Ser-174, and Ser-211. Positions 189–215 (HDSLSSVPSSSSSRKNSQGSNRSLDTI) are disordered. The span at 192-211 (LSSVPSSSSSRKNSQGSNRS) shows a compositional bias: low complexity. Phosphothreonine is present on residues Thr-214 and Thr-216. Ser-218 carries the post-translational modification Phosphoserine. C2 domains follow at residues 223-342 (DFGR…SLDI) and 344-471 (PPSK…NQWK). The short motif at 447–449 (RRK) is the Nuclear localization signal element.

The protein resides in the nucleus. The protein is Tandem C2 domains nuclear protein (TC2N) of Homo sapiens (Human).